Here is a 435-residue protein sequence, read N- to C-terminus: Xylose isomerase (435 aa).

Catalysis depends on residues His100 and Asp103. Residues Glu231, Glu267, His270, Asp295, Asp306, Asp308, and Asp338 each coordinate Mg(2+).

It belongs to the xylose isomerase family. As to quaternary structure, homotetramer. Mg(2+) serves as cofactor.

The protein localises to the cytoplasm. The enzyme catalyses alpha-D-xylose = alpha-D-xylulofuranose. The chain is Xylose isomerase from Brucella anthropi (strain ATCC 49188 / DSM 6882 / CCUG 24695 / JCM 21032 / LMG 3331 / NBRC 15819 / NCTC 12168 / Alc 37) (Ochrobactrum anthropi).